Consider the following 961-residue polypeptide: E3 ubiquitin-protein ligase TRIM37 (961 aa).

M1 is modified (N-acetylmethionine). The RING-type; degenerate zinc finger occupies 15–55; that stretch reads CFICMEKLRDARLCPHCSKLCCFSCIRRWLTEQRAQCPHCR. Residues 90 to 132 form a B box-type zinc finger; sequence NEKDKCENHHEKLSVFCWTCKKCICHQCALWGGMHGGHTFKPL. 4 residues coordinate Zn(2+): C95, H98, C117, and H124. Residues 132-234 are a coiled coil; the sequence is LAEIYEQHVT…VEHQLRSCSK (103 aa). One can recognise an MATH domain in the interval 276-403; sequence YDSATFVLEN…NDTVILRFQV (128 aa). Positions 419-450 form a coiled coil; that stretch reads ITQLEAAQTGYIQQINNLKERLTIELSRTQKS. 5 disordered regions span residues 447-514, 529-561, 645-665, 776-811, and 874-961; these read TQKS…HHEL, VNHL…SGEN, SLLQ…KQQA, AVDS…SPRA, and LESH…GGGR. S454 bears the Phosphoserine mark. Residues 504-514 are compositionally biased toward basic and acidic residues; the sequence is KIQNEDYHHEL. The segment covering 535 to 545 has biased composition (low complexity); the sequence is SSSSASSTATS. The segment covering 548–561 has biased composition (acidic residues); the sequence is EENDIDEETMSGEN. Residues 776-787 show a composition bias toward basic and acidic residues; that stretch reads AVDSGENSRSKG. The segment covering 795–806 has biased composition (low complexity); sequence GSSGSSQSGSRH. Acidic residues predominate over residues 903-915; sequence SDIECDTENEEQE.

This sequence belongs to the TRIM/RBCC family. In terms of assembly, associates with the PRC2/EED-EZH2 complex. Auto-ubiquitinated. In terms of tissue distribution, highly expressed in testis and brain. In embryonic tissues, expressed in epithelia, including ducts of the developing pancreas, epithelium of the midgut and nasal epithelium. In adult, detected in the central and peripheral nervous systems, including enteric ganglia, retina and the adrenal medulla (at protein level).

The protein localises to the chromosome. The protein resides in the cytoplasm. It localises to the perinuclear region. It is found in the peroxisome membrane. It catalyses the reaction S-ubiquitinyl-[E2 ubiquitin-conjugating enzyme]-L-cysteine + [acceptor protein]-L-lysine = [E2 ubiquitin-conjugating enzyme]-L-cysteine + N(6)-ubiquitinyl-[acceptor protein]-L-lysine.. It functions in the pathway protein modification; protein ubiquitination. Its function is as follows. E3 ubiquitin-protein ligase required to prevent centriole reduplication. Probably acts by ubiquitinating positive regulators of centriole reduplication. Mediates monoubiquitination of 'Lys-119' of histone H2A (H2AK119Ub), a specific tag for epigenetic transcriptional repression: associates with some Polycomb group (PcG) multiprotein PRC2-like complex and mediates repression of target genes. Also acts as a positive regulator of peroxisome import by mediating monoubiquitination of PEX5 at 'Lys-472': monoubiquitination promotes PEX5 stabilitation by preventing its polyubiquitination and degradation by the proteasome. In Mus musculus (Mouse), this protein is E3 ubiquitin-protein ligase TRIM37.